Reading from the N-terminus, the 1304-residue chain is Myosin-1 (1304 aa).

Basic residues predominate over residues M1–N12. Residues M1–K24 form a disordered region. The Myosin motor domain maps to V36 to D730. G129–T136 serves as a coordination point for ATP. A Phosphoserine modification is found at S364. The tract at residues S413–S496 is actin-binding. 2 IQ domains span residues H734 to A754 and A755 to G780. One can recognise a TH1 domain in the interval R788–G978. Disordered regions lie at residues D963–A1162 and E1214–W1304. 2 stretches are compositionally biased toward polar residues: residues S964 to P983 and R1001 to Q1012. Low complexity-rich tracts occupy residues Q1029–Q1052, Q1072–Q1096, and P1120–V1140. Over residues A1141–K1156 the composition is skewed to pro residues. The region spanning P1155–P1217 is the SH3 domain. 2 stretches are compositionally biased toward low complexity: residues P1217–K1227 and L1236–G1256. The segment covering D1292–W1304 has biased composition (acidic residues).

This sequence belongs to the TRAFAC class myosin-kinesin ATPase superfamily. Myosin family. Post-translationally, phosphorylation of the TEDS site (Ser-364) is required for the polarization of the actin cytoskeleton. Phosphorylation probably activates the myosin-I ATPase activity.

The protein localises to the cytoplasm. It localises to the cytoskeleton. It is found in the actin patch. Its function is as follows. Type-I myosin implicated in the organization of the actin cytoskeleton. Required for proper actin cytoskeleton polarization. At the cell cortex, assembles in patch-like structures together with proteins from the actin-polymerizing machinery and promotes actin assembly. Functions as actin nucleation-promoting factor (NPF) for the Arp2/3 complex. The sequence is that of Myosin-1 (MYO1) from Debaryomyces hansenii (strain ATCC 36239 / CBS 767 / BCRC 21394 / JCM 1990 / NBRC 0083 / IGC 2968) (Yeast).